Here is a 420-residue protein sequence, read N- to C-terminus: Exodeoxyribonuclease 7 large subunit (420 aa).

The protein belongs to the XseA family. Heterooligomer composed of large and small subunits.

The protein resides in the cytoplasm. The enzyme catalyses Exonucleolytic cleavage in either 5'- to 3'- or 3'- to 5'-direction to yield nucleoside 5'-phosphates.. Bidirectionally degrades single-stranded DNA into large acid-insoluble oligonucleotides, which are then degraded further into small acid-soluble oligonucleotides. In Helicobacter pylori (strain P12), this protein is Exodeoxyribonuclease 7 large subunit.